A 462-amino-acid polypeptide reads, in one-letter code: Signal recognition particle protein (462 aa).

GTP contacts are provided by residues 107–114, 190–194, and 248–251; these read GLQGAGKT, DTAGR, and TKVD.

Belongs to the GTP-binding SRP family. SRP54 subfamily. As to quaternary structure, part of the signal recognition particle protein translocation system, which is composed of SRP and FtsY. SRP is a ribonucleoprotein composed of Ffh and a 4.5S RNA molecule.

It is found in the cytoplasm. The catalysed reaction is GTP + H2O = GDP + phosphate + H(+). In terms of biological role, involved in targeting and insertion of nascent membrane proteins into the cytoplasmic membrane. Binds to the hydrophobic signal sequence of the ribosome-nascent chain (RNC) as it emerges from the ribosomes. The SRP-RNC complex is then targeted to the cytoplasmic membrane where it interacts with the SRP receptor FtsY. Interaction with FtsY leads to the transfer of the RNC complex to the Sec translocase for insertion into the membrane, the hydrolysis of GTP by both Ffh and FtsY, and the dissociation of the SRP-FtsY complex into the individual components. In Haemophilus influenzae (strain ATCC 51907 / DSM 11121 / KW20 / Rd), this protein is Signal recognition particle protein.